Here is an 858-residue protein sequence, read N- to C-terminus: Heat shock protein 105 kDa (858 aa).

Serine 2 is subject to N-acetylserine. Position 471 is an N6-acetyllysine (lysine 471). 2 disordered regions span residues 500-585 (KVPT…PPEA) and 801-858 (VNQP…MDLD). Residues 504 to 515 (EEDDGSSVEADM) are compositionally biased toward acidic residues. 2 positions are modified to phosphoserine: serine 509 and serine 510. The span at 533–549 (QQDNSEAGTQPQVQTDG) shows a compositional bias: polar residues. Phosphoserine is present on serine 558. 2 stretches are compositionally biased toward basic and acidic residues: residues 564–585 (EENKIPDADKANEKKVDQPPEA) and 806–815 (PKIESPKLER). Serine 810 bears the Phosphoserine mark. Residue threonine 816 is modified to Phosphothreonine. Residues 822–834 (LDKKEDLEGKDNF) show a composition bias toward basic and acidic residues.

It belongs to the heat shock protein 70 family. As to quaternary structure, interacts with HSPA8/HSC70. Interacts with HSPA1A (via NBD) and HSPA1B (via NBD). Post-translationally, phosphorylation on Ser-509 may be important for regulation of the HSPA8/HSC70 chaperone activity. Predominantly expressed in the brain and also found in the liver.

The protein resides in the cytoplasm. Functionally, acts as a nucleotide-exchange factor (NEF) for chaperone proteins HSPA1A and HSPA1B, promoting the release of ADP from HSPA1A/B thereby triggering substrate release. Prevents the aggregation of denatured proteins in cells under severe stress, on which the ATP levels decrease markedly. Inhibits HSPA8/HSC70 ATPase and chaperone activities. The polypeptide is Heat shock protein 105 kDa (HSPH1) (Cricetulus griseus (Chinese hamster)).